The sequence spans 521 residues: Cyclic AMP-responsive element-binding protein 3-like protein 2 (521 aa).

Residues 1-378 (MEVLESGEQS…CKLAGTQTGT (378 aa)) are Cytoplasmic-facing. Residues 83–103 (YSLSEEPRTQSPFTHAATSDS) show a composition bias toward polar residues. The segment at 83–106 (YSLSEEPRTQSPFTHAATSDSFND) is disordered. Position 93 is a phosphoserine (serine 93). A Glycyl lysine isopeptide (Lys-Gly) (interchain with G-Cter in SUMO2) cross-link involves residue lysine 178. Position 191 is a phosphoserine (serine 191). Residues 196 to 264 (SVDQLHLPPT…PHKLQGSGPL (69 aa)) form a disordered region. Low complexity predominate over residues 208–220 (SSHSSDSEGSLSP). Residues 294-357 (ALKKIRRKIK…RTLLQQLQKL (64 aa)) enclose the bZIP domain. Residues 296–325 (KKIRRKIKNKISAQESRRKKKEYMDSLEKK) are basic motif. A leucine-zipper region spans residues 336-357 (LRKKVEVLENTNRTLLQQLQKL). The chain crosses the membrane as a helical; Signal-anchor for type II membrane protein span at residues 379-399 (CLMVVVLCFAVAFGSFFQGYG). Residues 400–521 (PYPSATKMAL…ELERRVNATF (122 aa)) are Lumenal-facing. The S1P recognition motif lies at 427 to 430 (RNLL). 3 N-linked (GlcNAc...) asparagine glycosylation sites follow: asparagine 481, asparagine 505, and asparagine 518.

This sequence belongs to the bZIP family. ATF subfamily. In terms of assembly, binds DNA as a dimer. Upon ER stress, translocated to the Golgi apparatus, where it is processed by regulated intramembrane proteolysis (RIP) to release the cytosol-facing N-terminal transcription factor domain. The cleavage is performed sequentially by site-1 and site-2 proteases (S1P/MBTPS1 and S2P/MBTPS2). In terms of processing, N-glycosylated. Post-translationally, ubiquitinated by HRD1/SYVN1; undergoes 'Lys-48'-linked ubiquitination, followed by rapid proteasomal degradation under normal conditions. Upon ER stress, SYVN1 E3 ubiquitin-protein ligase dissociates from its substrate, ubiquitination does not occur and CREB3L2 is stabilized. As to expression, widely expressed, including in lung, bladder, ovary, testis and spleen. Highly expressed in chondrocytes.

It is found in the endoplasmic reticulum membrane. Its subcellular location is the nucleus. Functionally, transcription factor involved in unfolded protein response (UPR). In the absence of endoplasmic reticulum (ER) stress, inserted into ER membranes, with N-terminal DNA-binding and transcription activation domains oriented toward the cytosolic face of the membrane. In response to ER stress, transported to the Golgi, where it is cleaved in a site-specific manner by resident proteases S1P/MBTPS1 and S2P/MBTPS2. The released N-terminal cytosolic domain is translocated to the nucleus to effect transcription of specific target genes. Plays a critical role in chondrogenesis by activating the transcription of SEC23A, which promotes the transport and secretion of cartilage matrix proteins, and possibly that of ER biogenesis-related genes. In a neuroblastoma cell line, protects cells from ER stress-induced death. In vitro activates transcription of target genes via direct binding to the CRE site. The sequence is that of Cyclic AMP-responsive element-binding protein 3-like protein 2 (Creb3l2) from Mus musculus (Mouse).